The sequence spans 292 residues: Glutamate racemase (292 aa).

Residues 10 to 11 and 42 to 43 each bind substrate; these read DS and YG. The active-site Proton donor/acceptor is Cys73. 74–75 is a binding site for substrate; sequence NS. Cys186 acts as the Proton donor/acceptor in catalysis. Substrate is bound at residue 187-188; sequence TH.

It belongs to the aspartate/glutamate racemases family.

The catalysed reaction is L-glutamate = D-glutamate. Its pathway is cell wall biogenesis; peptidoglycan biosynthesis. In terms of biological role, provides the (R)-glutamate required for cell wall biosynthesis. This Beutenbergia cavernae (strain ATCC BAA-8 / DSM 12333 / CCUG 43141 / JCM 11478 / NBRC 16432 / NCIMB 13614 / HKI 0122) protein is Glutamate racemase.